We begin with the raw amino-acid sequence, 226 residues long: 2-C-methyl-D-erythritol 4-phosphate cytidylyltransferase (226 aa).

It belongs to the IspD/TarI cytidylyltransferase family. IspD subfamily.

The catalysed reaction is 2-C-methyl-D-erythritol 4-phosphate + CTP + H(+) = 4-CDP-2-C-methyl-D-erythritol + diphosphate. It functions in the pathway isoprenoid biosynthesis; isopentenyl diphosphate biosynthesis via DXP pathway; isopentenyl diphosphate from 1-deoxy-D-xylulose 5-phosphate: step 2/6. In terms of biological role, catalyzes the formation of 4-diphosphocytidyl-2-C-methyl-D-erythritol from CTP and 2-C-methyl-D-erythritol 4-phosphate (MEP). In Bacillus mycoides (strain KBAB4) (Bacillus weihenstephanensis), this protein is 2-C-methyl-D-erythritol 4-phosphate cytidylyltransferase.